The chain runs to 551 residues: Scaffold protein D13 ortholog (551 aa).

It belongs to the poxviridae protein D13 family. In terms of assembly, homotrimer. Self-assembles to form a layer. Interacts with A17 (via N-terminus); this interaction is necessary for D13 association with membranes.

The protein localises to the membrane. In terms of biological role, scaffold protein which forms a transitory spherical honeycomb lattice providing curvature and rigidity to the convex membrane of crescent and immature virions (IV). This association occurs concomitantly with viral membrane formation. Targeted by the drug rifampicin, which prevents the formation of this lattice, and hence virus morphogenesis. In the presence of rifampicin, irregularly shaped membranes that lack the honeycomb layer accumulate around areas of electron-dense viroplasm. This layer is lost from virions during maturation from IV to mature virion (MV), through the proteolysis of A17 N-terminus. The polypeptide is Scaffold protein D13 ortholog (Sus scrofa (Pig)).